A 401-amino-acid polypeptide reads, in one-letter code: Ribosomal RNA dihydrouridine synthase (401 aa).

Positions 15, 34, 35, 41, 47, 52, 132, 371, and 384 each coordinate FAD.

This sequence belongs to the BaiN/RdsA family. RdsA subfamily. The cofactor is FAD.

The catalysed reaction is a 5,6-dihydrouridine in mRNA + NAD(+) = a uridine in mRNA + NADH + H(+). Its function is as follows. Catalyzes the synthesis of 5,6-dihydrouridine (D) at position 2449 in 23S rRNA. This is Ribosomal RNA dihydrouridine synthase from Haemophilus influenzae (strain ATCC 51907 / DSM 11121 / KW20 / Rd).